A 345-amino-acid chain; its full sequence is Olfactory receptor 11G2 (345 aa).

At 1–62 the chain is on the extracellular side; that stretch reads MHFLSQNDLN…LGFPCPREGQ (62 aa). N43 is a glycosylation site (N-linked (GlcNAc...) asparagine). A helical transmembrane segment spans residues 63 to 83; it reads ILLFVLFTVVYLLTLMGNGSI. Residues 84-92 are Cytoplasmic-facing; it reads ICAVHWDQR. Residues 93-113 traverse the membrane as a helical segment; that stretch reads LHAPMYILLANFSFLEICYVT. Residues 114 to 135 are Extracellular-facing; the sequence is STVPSMLANFLSDTKIISFSGC. C135 and C217 form a disulfide bridge. The chain crosses the membrane as a helical span at residues 136 to 156; it reads FLQFYFFFSLGSTECFFLAVM. At 157–181 the chain is on the cytoplasmic side; sequence AFDRYLAICRPLRYPTIMTRRLCTN. The chain crosses the membrane as a helical span at residues 182–202; it reads LVVNCWVLGFIWFLIPIVNIS. Residues 203–241 are Extracellular-facing; that stretch reads QMSFCGSRIIDHFLCDPAPLLTLTCKKGPVIELVFSVLS. The chain crosses the membrane as a helical span at residues 242 to 264; sequence PLPVFMLFLFIVGSYALVVRAVL. Residues 265 to 275 are Cytoplasmic-facing; it reads RVPSAAGRRKA. The chain crosses the membrane as a helical span at residues 276–296; it reads FSTCGSHLAVVSLFYGSVLVM. Topologically, residues 297-309 are extracellular; the sequence is YGSPPSKNEAGKQ. A helical transmembrane segment spans residues 310–330; it reads KTVTLFYSVVTPLLNPVIYSL. Over 331 to 345 the chain is Cytoplasmic; sequence RNKDMRKALKKFWGT.

It belongs to the G-protein coupled receptor 1 family.

Its subcellular location is the cell membrane. In terms of biological role, odorant receptor. This Homo sapiens (Human) protein is Olfactory receptor 11G2 (OR11G2).